We begin with the raw amino-acid sequence, 211 residues long: Probable GTP-binding protein EngB (211 aa).

Residues 26–200 (SGIEIAFAGR…RQKLDDWFAA (175 aa)) form the EngB-type G domain. GTP-binding positions include 34 to 41 (GRSNAGKS), 61 to 65 (GRTRL), 79 to 82 (DLPG), 146 to 149 (TKAD), and 179 to 181 (FSS). Residues S41 and T63 each contribute to the Mg(2+) site.

Belongs to the TRAFAC class TrmE-Era-EngA-EngB-Septin-like GTPase superfamily. EngB GTPase family. Mg(2+) is required as a cofactor.

Functionally, necessary for normal cell division and for the maintenance of normal septation. The chain is Probable GTP-binding protein EngB from Sodalis glossinidius (strain morsitans).